The primary structure comprises 199 residues: Nucleoid occlusion factor SlmA (199 aa).

The region spanning glutamate 11 to leucine 71 is the HTH tetR-type domain. Residues threonine 34–tyrosine 53 constitute a DNA-binding region (H-T-H motif).

This sequence belongs to the nucleoid occlusion factor SlmA family. In terms of assembly, homodimer. Interacts with FtsZ.

It localises to the cytoplasm. The protein localises to the nucleoid. Functionally, required for nucleoid occlusion (NO) phenomenon, which prevents Z-ring formation and cell division over the nucleoid. Acts as a DNA-associated cell division inhibitor that binds simultaneously chromosomal DNA and FtsZ, and disrupts the assembly of FtsZ polymers. SlmA-DNA-binding sequences (SBS) are dispersed on non-Ter regions of the chromosome, preventing FtsZ polymerization at these regions. The sequence is that of Nucleoid occlusion factor SlmA from Pasteurella multocida (strain Pm70).